The following is a 334-amino-acid chain: Fructose-1,6-bisphosphatase class 1 (334 aa).

Positions 89, 112, 114, and 115 each coordinate Mg(2+). Substrate is bound by residues 115-118 (DGSS), N208, Y241, and K271. Residue E277 coordinates Mg(2+).

Belongs to the FBPase class 1 family. Homotetramer. Mg(2+) is required as a cofactor.

The protein localises to the cytoplasm. It catalyses the reaction beta-D-fructose 1,6-bisphosphate + H2O = beta-D-fructose 6-phosphate + phosphate. It functions in the pathway carbohydrate biosynthesis; gluconeogenesis. The polypeptide is Fructose-1,6-bisphosphatase class 1 (Photorhabdus laumondii subsp. laumondii (strain DSM 15139 / CIP 105565 / TT01) (Photorhabdus luminescens subsp. laumondii)).